The sequence spans 298 residues: Syntaxin-4 (298 aa).

The Cytoplasmic portion of the chain corresponds to Met-1–Val-274. Ser-15, Ser-29, Ser-35, Ser-36, Ser-117, Ser-208, and Ser-248 each carry phosphoserine. Positions Asp-38–Thr-163 form a coiled coil. Residues Glu-154–Gly-298 are interaction with CENPF. Positions Leu-200 to Ala-262 constitute a t-SNARE coiled-coil homology domain. A helical; Anchor for type IV membrane protein membrane pass occupies residues Met-275–Ile-295. Residues Thr-296–Gly-298 are Extracellular-facing.

The protein belongs to the syntaxin family. In terms of assembly, found in a complex with VAMP8 and SNAP23. Detected in a complex with SNAP23 and STXBP4. Interacts with SNAP23 and SNAPIN. Interacts with VAMP2. Interacts with LLGL1. Interacts (via C-terminus) with CENPF. Interacts with DOC2B. Interacts with STXBP3; excludes interaction with DOC2B and SNAP25. Interacts with STXBP4; excludes interaction with VAMP2. Component of the SNARE complex composed of STX4, SNAP23 and VAMP7 that interacts with SYT7 during lysosomal exocytosis. Interacts with STXBP6. Interacts with STXBP5L. Expressed in all tissues tested including adipose, brain, testis, intestine, liver, heart, spleen, skeletal muscle and kidney.

The protein localises to the cell membrane. The protein resides in the cell projection. It is found in the neuron projection. Its subcellular location is the stereocilium. Plasma membrane t-SNARE that mediates docking of transport vesicles. Necessary for the translocation of SLC2A4 from intracellular vesicles to the plasma membrane. In neurons, recruited at neurite tips to membrane domains rich in the phospholipid 1-oleoyl-2-palmitoyl-PC (OPPC) which promotes neurite tip surface expression of the dopamine transporter SLC6A3/DAT by facilitating fusion of SLC6A3-containing transport vesicles with the plasma membrane. Together with STXB3 and VAMP2, may also play a role in docking/fusion of intracellular GLUT4-containing vesicles with the cell surface in adipocytes and in docking of synaptic vesicles at presynaptic active zones. Required for normal hearing. The chain is Syntaxin-4 (Stx4) from Rattus norvegicus (Rat).